The following is an 89-amino-acid chain: Elongation factor 1-beta (89 aa).

Belongs to the EF-1-beta/EF-1-delta family.

Promotes the exchange of GDP for GTP in EF-1-alpha/GDP, thus allowing the regeneration of EF-1-alpha/GTP that could then be used to form the ternary complex EF-1-alpha/GTP/AAtRNA. This Methanococcoides burtonii (strain DSM 6242 / NBRC 107633 / OCM 468 / ACE-M) protein is Elongation factor 1-beta.